The following is a 224-amino-acid chain: Adenosylcobinamide-GDP ribazoletransferase (224 aa).

4 helical membrane-spanning segments follow: residues 21–41, 44–64, 97–117, and 156–176; these read LSFK…AAIP, LLYL…ATGL, GGIF…HSPL, and WPAA…TTAV.

The protein belongs to the CobS family. Mg(2+) is required as a cofactor.

The protein localises to the cell membrane. The catalysed reaction is alpha-ribazole + adenosylcob(III)inamide-GDP = adenosylcob(III)alamin + GMP + H(+). It catalyses the reaction alpha-ribazole 5'-phosphate + adenosylcob(III)inamide-GDP = adenosylcob(III)alamin 5'-phosphate + GMP + H(+). Its pathway is cofactor biosynthesis; adenosylcobalamin biosynthesis; adenosylcobalamin from cob(II)yrinate a,c-diamide: step 7/7. Joins adenosylcobinamide-GDP and alpha-ribazole to generate adenosylcobalamin (Ado-cobalamin). Also synthesizes adenosylcobalamin 5'-phosphate from adenosylcobinamide-GDP and alpha-ribazole 5'-phosphate. The protein is Adenosylcobinamide-GDP ribazoletransferase of Pyrobaculum aerophilum (strain ATCC 51768 / DSM 7523 / JCM 9630 / CIP 104966 / NBRC 100827 / IM2).